Reading from the N-terminus, the 270-residue chain is MSVDVKSDFSENESSSTPSPTTVPADVTWPHYPMMPFMQPHPLREKMLQPTFDPQIYGRWSQMGDTGFYGHPDLYPFGLPQLAANGQIPAVEAVDVKPPLSNGSSSSDSGMYPSPSDMMTPFPSTSSGAASSSELSAAAAAAANYQMRAATCYQQSVWPFMDYQQFQGFSWKMPLGNNHGKDRRSSSDGKTLPTGPGTNNVRVRTADKYRMVYSDYQRLELEKEFHTSPFITSDRKSQLSTMLSLTERQIKIWFQNRRAKDRRDKQKIRL.

Disordered regions lie at residues 1-24 (MSVD…TTVP), 96-130 (VKPP…SGAA), and 175-201 (LGNN…TNNV). Low complexity-rich tracts occupy residues 14–24 (SSSTPSPTTVP) and 101–130 (SNGS…SGAA). Positions 206-265 (ADKYRMVYSDYQRLELEKEFHTSPFITSDRKSQLSTMLSLTERQIKIWFQNRRAKDRRDK) form a DNA-binding region, homeobox.

Belongs to the Caudal homeobox family. In terms of assembly, interacts with tir-1 and let-756. As to expression, blastomeres. Embryo. Oocytes.

The protein localises to the nucleus. It is found in the chromosome. It localises to the centromere. Its subcellular location is the kinetochore. Functionally, transcriptional activator. Interacts with promoter regions for tbx-8.9, tbx-9, elt-1, hnd-1, scrt-1, and vab-7 genes. Binds the sequence ATTTATGAC. Binds to the enhancer region of the hlh-1 gene promoter during embryonic body wall muscle development. Activates the gene for mab-5 in embryo development. Necessary for vab-7 expression in C blastomeres in the posterior of embryos. Required for posterior V6 neuroectoblast cell fate specification during postembryonic neurogenesis (patterning) which generates the characteristic ray lineage during male tail development. Binds to ced-3 promoter and activated expression which is crucial for tail-spike cell death. Has a role in E cell specification in endoderm development and body wall muscle development. The protein is Homeobox protein pal-1 (pal-1) of Caenorhabditis elegans.